A 143-amino-acid polypeptide reads, in one-letter code: ATP synthase subunit b' (143 aa).

A helical transmembrane segment spans residues 6 to 26; sequence ATLPVMALQFILLAVILNAVF.

It belongs to the ATPase B chain family. As to quaternary structure, F-type ATPases have 2 components, F(1) - the catalytic core - and F(0) - the membrane proton channel. F(1) has five subunits: alpha(3), beta(3), gamma(1), delta(1), epsilon(1). F(0) has four main subunits: a(1), b(1), b'(1) and c(10-14). The alpha and beta chains form an alternating ring which encloses part of the gamma chain. F(1) is attached to F(0) by a central stalk formed by the gamma and epsilon chains, while a peripheral stalk is formed by the delta, b and b' chains.

Its subcellular location is the cellular thylakoid membrane. Its function is as follows. F(1)F(0) ATP synthase produces ATP from ADP in the presence of a proton or sodium gradient. F-type ATPases consist of two structural domains, F(1) containing the extramembraneous catalytic core and F(0) containing the membrane proton channel, linked together by a central stalk and a peripheral stalk. During catalysis, ATP synthesis in the catalytic domain of F(1) is coupled via a rotary mechanism of the central stalk subunits to proton translocation. In terms of biological role, component of the F(0) channel, it forms part of the peripheral stalk, linking F(1) to F(0). The b'-subunit is a diverged and duplicated form of b found in plants and photosynthetic bacteria. The protein is ATP synthase subunit b' of Microcystis aeruginosa (strain NIES-843 / IAM M-2473).